The sequence spans 208 residues: Transmembrane protein 160 (208 aa).

The transit peptide at 1-45 (MASIRWLMGSRLSRFVCPFAQLVRQPVLRYVRPPVRALHRGSVRR) directs the protein to the mitochondrion. The next 3 helical transmembrane spans lie at 82–102 (GFLS…IAFV), 110–130 (AGYA…ASYV), and 147–167 (VLLH…AVSL). Acidic residues predominate over residues 181–192 (DDEEHGADESSE). Residues 181 to 208 (DDEEHGADESSECAECRARRDREKGQDK) form a disordered region. Residues 194-208 (AECRARRDREKGQDK) are compositionally biased toward basic and acidic residues.

This sequence belongs to the TMEM160 family.

Its subcellular location is the mitochondrion inner membrane. The chain is Transmembrane protein 160 from Danio rerio (Zebrafish).